A 73-amino-acid polypeptide reads, in one-letter code: U3-agatoxin-Ao1i (73 aa).

The signal sequence occupies residues 1–20 (MRTIISLLLLSAMVFAEIEA). The propeptide occupies 21–34 (ISLEEGLQLFEGER). Cystine bridges form between Cys36-Cys52, Cys43-Cys57, Cys51-Cys67, and Cys59-Cys65. Serine amide is present on Ser71.

The protein belongs to the neurotoxin 07 (Beta/delta-agtx) family. 03 (aga-4) subfamily. Aga sub-subfamily. Expressed by the venom gland.

The protein localises to the secreted. Insecticidal neurotoxin that induces an irreversible spastic paralysis when injected into insects. Modifies presynaptic voltage-gated sodium channels (Nav), causing them to open at the normal resting potential of the nerve. This leads to spontaneous release of neurotransmitter and repetitive action potentials in motor neurons. This is U3-agatoxin-Ao1i from Agelena orientalis (Funnel-web spider).